Reading from the N-terminus, the 266-residue chain is BTB/POZ domain-containing protein KCTD2 (266 aa).

Alanine 2 carries the post-translational modification N-acetylalanine. A disordered region spans residues 38–79 (GRHPADTAASPPPPRTAGARARTSGADGRRRGRPLGPAQRGR). The span at 53 to 63 (TAGARARTSGA) shows a compositional bias: low complexity. The BTB domain occupies 76–174 (QRGRYLLRDT…LVKERIRDNE (99 aa)).

In Mus musculus (Mouse), this protein is BTB/POZ domain-containing protein KCTD2 (Kctd2).